Here is a 409-residue protein sequence, read N- to C-terminus: Na(+)-translocating NADH-quinone reductase subunit F (409 aa).

Residues 5 to 25 (FIFGIIAFTALVLVLAVIILF) form a helical membrane-spanning segment. The 2Fe-2S ferredoxin-type domain occupies 34–128 (GDITISINDD…SMDVELPEEI (95 aa)). Cys-71, Cys-77, Cys-80, and Cys-112 together coordinate [2Fe-2S] cluster. The FAD-binding FR-type domain maps to 131-271 (VKKWECTVIS…SGPFGEFFAK (141 aa)).

This sequence belongs to the NqrF family. As to quaternary structure, composed of six subunits; NqrA, NqrB, NqrC, NqrD, NqrE and NqrF. It depends on [2Fe-2S] cluster as a cofactor. The cofactor is FAD.

It is found in the cell inner membrane. The enzyme catalyses a ubiquinone + n Na(+)(in) + NADH + H(+) = a ubiquinol + n Na(+)(out) + NAD(+). Its function is as follows. NQR complex catalyzes the reduction of ubiquinone-1 to ubiquinol by two successive reactions, coupled with the transport of Na(+) ions from the cytoplasm to the periplasm. The first step is catalyzed by NqrF, which accepts electrons from NADH and reduces ubiquinone-1 to ubisemiquinone by a one-electron transfer pathway. This is Na(+)-translocating NADH-quinone reductase subunit F from Haemophilus ducreyi (strain 35000HP / ATCC 700724).